Reading from the N-terminus, the 107-residue chain is EPIDERMAL PATTERNING FACTOR-like protein 3 (107 aa).

The N-terminal stretch at 1-24 is a signal peptide; sequence MEYMFLLMSKFFFVFPIIIYIGPA. 3 disulfide bridges follow: Cys64–Cys102, Cys68–Cys74, and Cys71–Cys104.

This sequence belongs to the plant cysteine rich small secretory peptide family. Epidermal patterning factor subfamily.

The protein resides in the secreted. Functionally, controls stomatal patterning. The polypeptide is EPIDERMAL PATTERNING FACTOR-like protein 3 (Arabidopsis thaliana (Mouse-ear cress)).